Here is a 34-residue protein sequence, read N- to C-terminus: Toxin GTx1-15 (34 aa).

Cystine bridges form between C2–C17, C9–C23, and C16–C30. The residue at position 34 (F34) is a Phenylalanine amide.

The protein belongs to the neurotoxin 10 (Hwtx-1) family. 08 (Gtx1-15) subfamily. As to expression, expressed by the venom gland.

It localises to the secreted. Functionally, potent voltage-gated sodium channel blocker. Potently inhibits the voltage-gated sodium channels Nav1.7/SCN9A (IC(50)=0.58-10 nM). Also shows a moderate activity on Nav1.1/SCN1A (IC(50)=6 nM), Nav1.2/SCN2A (IC(50)=5-128 nM), Nav1.3/SCN3A (IC(50)=20.3-170 nM), and Nav1.6/SCN8A (IC(50)=17-20.1 nM). Shows an unclear inhibition of Nav1.4/SCN4A (IC(50)=200 nM to &gt;10 uM), Nav1.5/SCN5A (IC(50)=140 nM to &gt;10 uM) and Nav1.8/SCN10A (IC(50)=68-12200 nM). Weakly blocks the low voltage-gated calcium channels Cav3.1/CACNA1G (30% inhibition of the peak current at 9.8 nM). shows moderate affinity for lipid bilayers. In vivo, when tested on the OD1-induced mouse model of Nav1.7/SCN9A-mediated pain, the toxin is effective when co-administered with OD1, but lacks efficacy when delivered systemically. This chain is Toxin GTx1-15, found in Grammostola porteri (Tarantula spider).